The primary structure comprises 211 residues: Large ribosomal subunit protein bL25 (211 aa).

Over residues 1 to 18 (MAKTHEIKAERRADEGKG) the composition is skewed to basic and acidic residues. Residues 1–20 (MAKTHEIKAERRADEGKGAS) form a disordered region.

This sequence belongs to the bacterial ribosomal protein bL25 family. CTC subfamily. In terms of assembly, part of the 50S ribosomal subunit; part of the 5S rRNA/L5/L18/L25 subcomplex. Contacts the 5S rRNA. Binds to the 5S rRNA independently of L5 and L18.

Its function is as follows. This is one of the proteins that binds to the 5S RNA in the ribosome where it forms part of the central protuberance. This chain is Large ribosomal subunit protein bL25, found in Xanthomonas oryzae pv. oryzae (strain MAFF 311018).